Consider the following 41-residue polypeptide: Large ribosomal subunit protein bL36 (41 aa).

This sequence belongs to the bacterial ribosomal protein bL36 family.

This is Large ribosomal subunit protein bL36 from Nitrobacter hamburgensis (strain DSM 10229 / NCIMB 13809 / X14).